Reading from the N-terminus, the 297-residue chain is 4-hydroxy-tetrahydrodipicolinate synthase (297 aa).

A pyruvate-binding site is contributed by Thr-49. Catalysis depends on Tyr-137, which acts as the Proton donor/acceptor. The Schiff-base intermediate with substrate role is filled by Lys-166. Ile-208 is a pyruvate binding site.

Belongs to the DapA family. In terms of assembly, homotetramer; dimer of dimers.

The protein localises to the cytoplasm. It catalyses the reaction L-aspartate 4-semialdehyde + pyruvate = (2S,4S)-4-hydroxy-2,3,4,5-tetrahydrodipicolinate + H2O + H(+). The protein operates within amino-acid biosynthesis; L-lysine biosynthesis via DAP pathway; (S)-tetrahydrodipicolinate from L-aspartate: step 3/4. Catalyzes the condensation of (S)-aspartate-beta-semialdehyde [(S)-ASA] and pyruvate to 4-hydroxy-tetrahydrodipicolinate (HTPA). This is 4-hydroxy-tetrahydrodipicolinate synthase from Phocaeicola vulgatus (strain ATCC 8482 / DSM 1447 / JCM 5826 / CCUG 4940 / NBRC 14291 / NCTC 11154) (Bacteroides vulgatus).